Reading from the N-terminus, the 750-residue chain is Photosystem I P700 chlorophyll a apoprotein A1 (750 aa).

8 helical membrane-spanning segments follow: residues 70 to 93, 156 to 179, 195 to 219, 291 to 309, 346 to 369, 385 to 411, 433 to 455, and 531 to 549; these read VFSA…FHGA, LYCT…FHYH, LNHH…HVSL, IAHH…GHMY, WHAQ…HHMY, LSLF…IFMV, AIIS…LYIH, and FLVH…LILL. [4Fe-4S] cluster is bound by residues C573 and C582. The next 2 membrane-spanning stretches (helical) occupy residues 589 to 610 and 664 to 686; these read HVFL…HFSW and LSAY…MFLF. Residue H675 participates in chlorophyll a' binding. The chlorophyll a site is built by M683 and Y691. W692 provides a ligand contact to phylloquinone. The chain crosses the membrane as a helical span at residues 724 to 744; that stretch reads AVGVTHYLLGGIATTWAFFLA.

This sequence belongs to the PsaA/PsaB family. The PsaA/B heterodimer binds the P700 chlorophyll special pair and subsequent electron acceptors. PSI consists of a core antenna complex that captures photons, and an electron transfer chain that converts photonic excitation into a charge separation. The eukaryotic PSI reaction center is composed of at least 11 subunits. Requires P700 is a chlorophyll a/chlorophyll a' dimer, A0 is one or more chlorophyll a, A1 is one or both phylloquinones and FX is a shared 4Fe-4S iron-sulfur center. as cofactor.

It is found in the plastid. It localises to the chloroplast thylakoid membrane. The enzyme catalyses reduced [plastocyanin] + hnu + oxidized [2Fe-2S]-[ferredoxin] = oxidized [plastocyanin] + reduced [2Fe-2S]-[ferredoxin]. Its function is as follows. PsaA and PsaB bind P700, the primary electron donor of photosystem I (PSI), as well as the electron acceptors A0, A1 and FX. PSI is a plastocyanin-ferredoxin oxidoreductase, converting photonic excitation into a charge separation, which transfers an electron from the donor P700 chlorophyll pair to the spectroscopically characterized acceptors A0, A1, FX, FA and FB in turn. Oxidized P700 is reduced on the lumenal side of the thylakoid membrane by plastocyanin. The sequence is that of Photosystem I P700 chlorophyll a apoprotein A1 from Lobularia maritima (Sweet alyssum).